The following is an 84-amino-acid chain: Putative membrane protein insertion efficiency factor (84 aa).

The disordered stretch occupies residues 63-84 (LGGSGYDPPPPPKTPRKWKCEE).

Belongs to the UPF0161 family.

The protein resides in the cell inner membrane. Functionally, could be involved in insertion of integral membrane proteins into the membrane. The chain is Putative membrane protein insertion efficiency factor from Caulobacter sp. (strain K31).